The sequence spans 385 residues: Di-N-acetylchitobiase (385 aa).

The first 38 residues, 1–38, serve as a signal peptide directing secretion; that stretch reads MSRPQLRRWRLVSSPPSGVPGLALLALLALLALRLAAG. In terms of domain architecture, GH18 spans 39-385; sequence TDCPCPEPEL…EVLKPKLLQR (347 aa). Catalysis depends on glutamate 143, which acts as the Proton donor. 4 N-linked (GlcNAc...) asparagine glycosylation sites follow: asparagine 193, asparagine 228, asparagine 262, and asparagine 299.

It belongs to the glycosyl hydrolase 18 family.

It localises to the lysosome. In terms of biological role, involved in the degradation of asparagine-linked glycoproteins. Hydrolyze of N-acetyl-beta-D-glucosamine (1-4)N-acetylglucosamine chitobiose core from the reducing end of the bond, it requires prior cleavage by glycosylasparaginase. The chain is Di-N-acetylchitobiase (CTBS) from Homo sapiens (Human).